We begin with the raw amino-acid sequence, 143 residues long: High mobility group protein B (143 aa).

Positions M1–Q22 are disordered. Residues P18–K86 constitute a DNA-binding region (HMG box). A70 carries the post-translational modification Blocked amino end (Ala). 2 stretches are compositionally biased toward basic and acidic residues: residues A100–K120 and A131–K143. The tract at residues A100–K143 is disordered.

Its subcellular location is the nucleus. The protein resides in the chromosome. The chain is High mobility group protein B from Tetrahymena thermophila.